Reading from the N-terminus, the 308-residue chain is 2-methylisocitrate lyase (308 aa).

Position 54–56 (54–56 (SGG)) interacts with substrate. Positions 94 and 96 each coordinate Mg(2+). Substrate is bound by residues 131–132 (CG), R166, E196, 224–226 (NIT), R255, and R284.

The protein belongs to the isocitrate lyase/PEP mutase superfamily. Methylisocitrate lyase family. Homotetramer; dimer of dimers. The cofactor is Mg(2+).

The catalysed reaction is (2S,3R)-3-hydroxybutane-1,2,3-tricarboxylate = pyruvate + succinate. The protein operates within organic acid metabolism; propanoate degradation. Its function is as follows. Involved in the catabolism of short chain fatty acids (SCFA) via the 2-methylcitrate cycle I (propionate degradation route). Catalyzes the thermodynamically favored C-C bond cleavage reaction of (2R,3S)-2-methylisocitrate to yield pyruvate and succinate via an alpha-carboxy-carbanion intermediate. In Vibrio cholerae serotype O1 (strain ATCC 39315 / El Tor Inaba N16961), this protein is 2-methylisocitrate lyase.